A 563-amino-acid chain; its full sequence is Kdo(2)-lipid A phosphoethanolamine 7''-transferase (563 aa).

The Cytoplasmic segment spans residues 1 to 9; sequence MRYIKSITQ. The helical transmembrane segment at 10–30 threads the bilayer; sequence QKLSFLLAIYIGLFMNGAVFY. Residues 31–48 are Periplasmic-facing; it reads RRFGSYAHDFTVWKGISA. The helical transmembrane segment at 49 to 69 threads the bilayer; sequence VVELAATVLVTFFLLRLLSLF. The Cytoplasmic segment spans residues 70-79; sequence GRRSWRILAS. The helical transmembrane segment at 80-100 threads the bilayer; the sequence is LVVLFSAGASYYMTFLNVVIG. Over 101 to 117 the chain is Periplasmic; that stretch reads YGIIASVMTTDIDLSKE. A helical transmembrane segment spans residues 118–138; that stretch reads VVGLNFILWLIAVSALPLILI. Residues 139-159 are Cytoplasmic-facing; it reads WNNRCRYTLLRQLRTPGQRIR. The chain crosses the membrane as a helical span at residues 160-180; that stretch reads SLAVVVLAGIMVWAPIRLLDI. Residues 181 to 563 lie on the Periplasmic side of the membrane; the sequence is QQKKVERATG…IPQAKEAAAN (383 aa).

This sequence belongs to the phosphoethanolamine transferase family. EptB subfamily. Ca(2+) is required as a cofactor.

It is found in the cell inner membrane. It carries out the reaction alpha-Kdo-(2-&gt;4)-alpha-Kdo-(2-&gt;6)-lipid A (E. coli) + a 1,2-diacyl-sn-glycero-3-phosphoethanolamine = 7-O-[2-aminoethoxy(hydroxy)phosphoryl]-alpha-Kdo-(2-&gt;4)-alpha-Kdo-(2-&gt;6)-lipid A + a 1,2-diacyl-sn-glycerol. The enzyme catalyses alpha-Kdo-(2-&gt;4)-alpha-Kdo-(2-&gt;6)-lipid IVA (E. coli) + a 1,2-diacyl-sn-glycero-3-phosphoethanolamine = 7-O-[2-aminoethoxy(hydroxy)phosphoryl]-alpha-Kdo-(2-&gt;4)-alpha-Kdo-(2-&gt;6)-lipid IVA (E. coli) + a 1,2-diacyl-sn-glycerol. Inhibited by calcium concentrations higher than 1 mM. Its function is as follows. Catalyzes the addition of a phosphoethanolamine (pEtN) moiety to the outer 3-deoxy-D-manno-octulosonic acid (Kdo) residue of a Kdo(2)-lipid A. Phosphatidylethanolamines with one unsaturated acyl group function as pEtN donors and the reaction releases diacylglycerol. The chain is Kdo(2)-lipid A phosphoethanolamine 7''-transferase (eptB) from Escherichia coli (strain K12).